A 138-amino-acid chain; its full sequence is Putative transcriptional regulatory protein NedR (138 aa).

Residues 1–25 (MCWGRSWTFGRSSSKGWRPTSSASS) are disordered. A compositionally biased stretch (polar residues) spans 9-25 (FGRSSSKGWRPTSSASS).

Its function is as follows. May serve as a transcriptional regulator. This is Putative transcriptional regulatory protein NedR (nedR) from Micromonospora viridifaciens.